A 224-amino-acid chain; its full sequence is MNLRLCSGCRHNGIVSEQGYEYCIFCESVFQKCTKVQKKSNFHVSNKLIHLRNVLRRLLSHQCSGEIISELLDIMEKNQISTDDVDANFVSSFLKANERINKKDYKLVFEIINQVKDEKLNLSTEKINEVVEIFKHLVFFCQENTPSKTINYSFFLDKIFDITSVTKNLKPQTVKNYTKNNSNQLVWENFLAHMRSKKRVTMVEDYGHEYVFVDERFSTCSLEV.

Residues 6-26 (CSGCRHNGIVSEQGYEYCIFC) fold into a zinc finger.

This sequence belongs to the orthopoxvirus VLTF-3/OPG127 family. Interacts with the late transcription elongation factor VLTF-4/OPG110. Interacts with the late transcription factors VLTF-1/OPG093.

Acts with RNA polymerase to initiate transcription from late gene promoters. The protein is Viral late gene transcription factor 3 (OPG127) of Vaccinia virus (strain Ankara) (VACV).